Here is a 271-residue protein sequence, read N- to C-terminus: Probable CAAX prenyl protease 2 (271 aa).

Helical transmembrane passes span 3–23 and 42–62; these read VYLI…TFPV and CISV…IIGP. Catalysis depends on proton donor/acceptor residues E126 and H160. The next 2 helical transmembrane spans lie at 174 to 194 and 236 to 256; these read AYIA…VFGW and IYYT…GITD.

The protein belongs to the peptidase U48 family.

Its subcellular location is the endoplasmic reticulum membrane. The enzyme catalyses Hydrolyzes the peptide bond -P2-(S-farnesyl or geranylgeranyl)C-P1'-P2'-P3'-COOH where P1' and P2' are amino acids with aliphatic sidechains and P3' is any C-terminal residue.. Protease involved in the processing of a variety of prenylated proteins containing the C-terminal CAAX motif, where C is a cysteine modified with an isoprenoid lipid, A is an aliphatic amino acid and X is any C-terminal amino acid. Proteolytically removes the C-terminal three residues of farnesylated proteins, leaving the prenylated cysteine as the new C-terminus. This Schizosaccharomyces pombe (strain 972 / ATCC 24843) (Fission yeast) protein is Probable CAAX prenyl protease 2.